A 98-amino-acid chain; its full sequence is Small ribosomal subunit protein bS6 (98 aa).

Belongs to the bacterial ribosomal protein bS6 family.

Functionally, binds together with bS18 to 16S ribosomal RNA. The polypeptide is Small ribosomal subunit protein bS6 (Levilactobacillus brevis (strain ATCC 367 / BCRC 12310 / CIP 105137 / JCM 1170 / LMG 11437 / NCIMB 947 / NCTC 947) (Lactobacillus brevis)).